Consider the following 427-residue polypeptide: MAEQDVENELLDYDEDEEPQVPQESTPAPPKKDVKGSYVSIHSSGFRDFLLKPELLRAIVDCGFEHPSEVQHECIPQAILGMDVLCQAKSGMGKTAVFVLATLQQIEPINGQVSVLVMCHTRELAFQISKEYERFSKYMPSVKVSVFFGGLSIKKDEDVLKKNCPHVVVGTPGRILALVRSRSLNLRNVKHFVLDECDKMLEQLDMRRDVQEIFRLTPHEKQCMMFSATLSKEIRPVCRKFMQDPMEVFVDDETKLTLHGLQQYYVKLKDSEKNRKLFDLLDVLEFNQVVIFVKSVQRCMALAQLLVEQNFPAIAIHRGMAQEERLSRYQQFKDFQRRILVATNLFGRGMDIERVNIVFNYDMPEDSDTYLHRVARAGRFGTKGLAVTFVSDENDAKILNDVQDRFEVNVAELPEEIDISTYIEQSR.

Over residues 1 to 19 the composition is skewed to acidic residues; sequence MAEQDVENELLDYDEDEEP. Positions 1 to 35 are disordered; it reads MAEQDVENELLDYDEDEEPQVPQESTPAPPKKDVK. Ala-2 bears the N-acetylalanine mark. Lys-31 is covalently cross-linked (Glycyl lysine isopeptide (Lys-Gly) (interchain with G-Cter in SUMO2)). An N6-acetyllysine; alternate modification is found at Lys-35. Lys-35 is covalently cross-linked (Glycyl lysine isopeptide (Lys-Gly) (interchain with G-Cter in SUMO2); alternate). Ser-37 is subject to Phosphoserine. Residues 44–72 carry the Q motif motif; it reads SGFRDFLLKPELLRAIVDCGFEHPSEVQH. One can recognise a Helicase ATP-binding domain in the interval 75–248; that stretch reads IPQAILGMDV…RKFMQDPMEV (174 aa). 88 to 95 contributes to the ATP binding site; that stretch reads AKSGMGKT. Residues Lys-154 and Lys-162 each participate in a glycyl lysine isopeptide (Lys-Gly) (interchain with G-Cter in SUMO2) cross-link. The residue at position 171 (Thr-171) is a Phosphothreonine. The DECD box signature appears at 195–198; it reads DECD. Residues Lys-240 and Lys-255 each participate in a glycyl lysine isopeptide (Lys-Gly) (interchain with G-Cter in SUMO2) cross-link. Residues 260-421 form the Helicase C-terminal domain; sequence GLQQYYVKLK…ELPEEIDIST (162 aa). Phosphoserine is present on Ser-426.

This sequence belongs to the DEAD box helicase family. DECD subfamily. In terms of assembly, binds ALYREF/THOC4 and DDX39B/BAT1. Interacts with the apo-AREX complex component SARNP. Interacts with MX1. Interacts with MCM3AP isoform GANP. Interacts with ECD. Interacts with PHAX; this interaction stimulates PHAX RNA binding activity. SUMOylated by RANBP2; SUMOylation modification affects its ability to bind RNA.

The protein resides in the nucleus. It localises to the cytoplasm. The enzyme catalyses ATP + H2O = ADP + phosphate + H(+). Its function is as follows. Helicase that plays an essential role in mRNA export and is involved in multiple steps in RNA metabolism including alternative splicing. Regulates nuclear mRNA export to the cytoplasm through association with ECD. Also involved in spliceosomal uridine-rich small nuclear RNA (U snRNA) export by stimulating the RNA binding of adapter PHAX. Plays a role in the negative regulation of type I IFN production by increasing the nuclear retention of antiviral transcripts and thus reducing their protein expression. Independently of the interferon pathway, plays an antiviral role against alphaviruses by binding to a 5' conserved sequence element in the viral genomic RNA. The protein is ATP-dependent RNA helicase DDX39A (Ddx39a) of Rattus norvegicus (Rat).